Consider the following 842-residue polypeptide: MPLSYQHFRRLLLLDEEAGPLEEELPRLADEDLNRRVAEDLHLQLPNVSIPWTHKVGNFTGLYSSTIPVFNPDWQTPSFPNIHLHQDIITKCEQFVGPLTVNEKRRLKLVMPARFFPNSTKYLPLDKGIKPYYPENVVNHYFQTRHYLHTLWKAGILYKRETSRSASFCGSPYTWEQDLQHGAFLDGPSRVGKEPFHQQSSRIPSRSPVGPSIQSKYQQSRLGLQSQKGPLARGQQGRSWSLWTRVHPSTRRPFGVEPSVSGHTNNFASRSASCLHQSSVREAAYSHLSTTKRQSSSGHAVELYSIPPSSTKSQSQGPVFSCWWLQFRDSEPCSDYCLSHLVNLLQDWGPCTEHGEYHIRIPRTPARVTGGVFLVDKNPHNTAESRLVVDFSQFSRGSARVSWPKFAVPNLQSLTNLLSSNLSWLSLDVSAAFYHIPLHPAAMPHLLVGSSGLSRYVARLSSDSRILDHQYGTLQNLHDSCSRQLYVSLMLLYKTFGRKLHLYSHPIILGFRKIPMGVGLSPFLLAQFTSAICSVVRRAFPHCLAFSYMDDVVLGAKSVQHLESLYTAVTNFLLSLGIHLNPNKTKRWGYSLNFMGYVIGSWGTLPQEHITQKIKQCFRKLPVNRPIDWKVCQRITGLLGFAAPFTQCGYPALMPLYACIQAKQAFTFSPTYKAFLCKQYMNLYPVARQRPGLCQVFADATPTGWGLAIGHQRMRGTFVAPLPIHTAELLAACFARSRSGAKLIGTDNSVVLSRKYTSFPWLLGCAANWILRGTSFVYVPSALNPADDPSRGRLGLCRPLLRLPFLPTTGRTSLYAVSPSVPSHLPDRVHFASPLHVTWKPP.

The segment at 1 to 177 (MPLSYQHFRR…FCGSPYTWEQ (177 aa)) is terminal protein domain (TP). The spacer stretch occupies residues 178 to 345 (DLQHGAFLDG…YCLSHLVNLL (168 aa)). A disordered region spans residues 184 to 238 (FLDGPSRVGKEPFHQQSSRIPSRSPVGPSIQSKYQQSRLGLQSQKGPLARGQQGR). The segment covering 212-228 (SIQSKYQQSRLGLQSQK) has biased composition (polar residues). The tract at residues 346–689 (QDWGPCTEHG…YMNLYPVARQ (344 aa)) is polymerase/reverse transcriptase domain (RT). The region spanning 356–599 (EYHIRIPRTP…YSLNFMGYVI (244 aa)) is the Reverse transcriptase domain. Asp428, Asp550, and Asp551 together coordinate Mg(2+).

The protein belongs to the hepadnaviridae P protein family.

The catalysed reaction is DNA(n) + a 2'-deoxyribonucleoside 5'-triphosphate = DNA(n+1) + diphosphate. It carries out the reaction Endonucleolytic cleavage to 5'-phosphomonoester.. Its activity is regulated as follows. Activated by host HSP70 and HSP40 in vitro to be able to bind the epsilon loop of the pgRNA. Because deletion of the RNase H region renders the protein partly chaperone-independent, the chaperones may be needed indirectly to relieve occlusion of the RNA-binding site by this domain. Inhibited by several reverse-transcriptase inhibitors: Lamivudine, Adefovir and Entecavir. Multifunctional enzyme that converts the viral RNA genome into dsDNA in viral cytoplasmic capsids. This enzyme displays a DNA polymerase activity that can copy either DNA or RNA templates, and a ribonuclease H (RNase H) activity that cleaves the RNA strand of RNA-DNA heteroduplexes in a partially processive 3'- to 5'-endonucleasic mode. Neo-synthesized pregenomic RNA (pgRNA) are encapsidated together with the P protein, and reverse-transcribed inside the nucleocapsid. Initiation of reverse-transcription occurs first by binding the epsilon loop on the pgRNA genome, and is initiated by protein priming, thereby the 5'-end of (-)DNA is covalently linked to P protein. Partial (+)DNA is synthesized from the (-)DNA template and generates the relaxed circular DNA (RC-DNA) genome. After budding and infection, the RC-DNA migrates in the nucleus, and is converted into a plasmid-like covalently closed circular DNA (cccDNA). The activity of P protein does not seem to be necessary for cccDNA generation, and is presumably released from (+)DNA by host nuclear DNA repair machinery. This Hepatitis B virus genotype G (isolate United States/USG17/2002) (HBV-G) protein is Protein P.